A 99-amino-acid polypeptide reads, in one-letter code: Protein AC4 (99 aa).

Belongs to the geminiviridae protein AC4/C4 family.

In terms of biological role, pathogenicity determinant. May act as a suppressor of RNA-mediated gene silencing, also known as post-transcriptional gene silencing (PTGS), a mechanism of plant viral defense that limits the accumulation of viral RNAs. The sequence is that of Protein AC4 from Glycine max (Soybean).